Consider the following 84-residue polypeptide: Insulin-like peptide 05 (84 aa).

An N-terminal signal peptide occupies residues 1-22 (MKTPILFVVVVAVLIVTDSAEG). Residues 23-37 (FKGKANSFLKPLQRR) constitute a propeptide that is removed on maturation. 3 cysteine pairs are disulfide-bonded: Cys43–Cys48, Cys44–Cys73, and Cys57–Cys61.

The protein belongs to the insulin family.

The protein localises to the secreted. In terms of biological role, insulin decreases blood glucose concentration. May have evolved to activate insulin receptors (INSR) in vertebrates. Molecular docking studies reveals unique interaction with the human insulin receptor. In vivo, insulin-like peptide injection reduces blood glucose levels in two models of zebrafish diabetes (streptozotocin- and glucose-induced). Also shorter swimming distance of zebrafish larvae, an effect which is not observed with human insulin. This is Insulin-like peptide 05 from Exaiptasia diaphana (Tropical sea anemone).